Here is a 307-residue protein sequence, read N- to C-terminus: Ribonuclease Z (307 aa).

The Zn(2+) site is built by His-61, His-63, Asp-65, His-66, His-138, Asp-208, and His-264. The active-site Proton acceptor is Asp-65.

The protein belongs to the RNase Z family. In terms of assembly, homodimer. It depends on Zn(2+) as a cofactor.

It carries out the reaction Endonucleolytic cleavage of RNA, removing extra 3' nucleotides from tRNA precursor, generating 3' termini of tRNAs. A 3'-hydroxy group is left at the tRNA terminus and a 5'-phosphoryl group is left at the trailer molecule.. Zinc phosphodiesterase, which displays some tRNA 3'-processing endonuclease activity. Probably involved in tRNA maturation, by removing a 3'-trailer from precursor tRNA. The sequence is that of Ribonuclease Z from Pyrococcus horikoshii (strain ATCC 700860 / DSM 12428 / JCM 9974 / NBRC 100139 / OT-3).